Here is a 370-residue protein sequence, read N- to C-terminus: Putative FBD-associated F-box protein At1g50980 (370 aa).

One can recognise an F-box domain in the interval 31–77 (IRTISEFPDKVLLKILSLLPSKDVVATGVLSKRWRSLWKDVKTFRTS). An FBD domain is found at 292 to 343 (LMGNQPDLIPKSLSSHLEILEWRQYNDTAQEREAAKYILANASGLRKATFYT).

The polypeptide is Putative FBD-associated F-box protein At1g50980 (Arabidopsis thaliana (Mouse-ear cress)).